A 491-amino-acid polypeptide reads, in one-letter code: Anthranilate synthase component 1 (491 aa).

Residues Ser-49 and 271–273 each bind L-tryptophan; that span reads PYL. 306 to 307 is a chorismate binding site; it reads GT. Glu-333 provides a ligand contact to Mg(2+). Residues Tyr-421, Arg-441, 455–457, and Gly-457 each bind chorismate; that span reads GAG. Mg(2+) is bound at residue Glu-470.

This sequence belongs to the anthranilate synthase component I family. Heterotetramer consisting of two non-identical subunits: a beta subunit (TrpG) and a large alpha subunit (TrpE). The cofactor is Mg(2+).

It carries out the reaction chorismate + L-glutamine = anthranilate + pyruvate + L-glutamate + H(+). The protein operates within amino-acid biosynthesis; L-tryptophan biosynthesis; L-tryptophan from chorismate: step 1/5. Its activity is regulated as follows. Feedback inhibited by tryptophan. Functionally, part of a heterotetrameric complex that catalyzes the two-step biosynthesis of anthranilate, an intermediate in the biosynthesis of L-tryptophan. In the first step, the glutamine-binding beta subunit (TrpG) of anthranilate synthase (AS) provides the glutamine amidotransferase activity which generates ammonia as a substrate that, along with chorismate, is used in the second step, catalyzed by the large alpha subunit of AS (TrpE) to produce anthranilate. In the absence of TrpG, TrpE can synthesize anthranilate directly from chorismate and high concentrations of ammonia. The protein is Anthranilate synthase component 1 (trpE) of Neisseria meningitidis serogroup B (strain ATCC BAA-335 / MC58).